A 318-amino-acid polypeptide reads, in one-letter code: Taste receptor type 2 member 117 (318 aa).

Residues 1 to 16 (MQHNLKTIFVISHSTL) are Extracellular-facing. The chain crosses the membrane as a helical span at residues 17–37 (TIILFTELVTGIIGNGFMALV). Residues 38 to 53 (HCMDWLRRKKISLVNQ) lie on the Cytoplasmic side of the membrane. The helical transmembrane segment at 54 to 74 (ILTALAISRIFQLCLLFISLV) threads the bilayer. Residues 75-93 (ISFSYPDLTTTSLIKVTCN) lie on the Extracellular side of the membrane. The chain crosses the membrane as a helical span at residues 94-114 (LWIIVNHFNIWLATCLGIFYF). The Cytoplasmic segment spans residues 115-134 (LKISNFSNSLFLYLKWRVEK). The chain crosses the membrane as a helical span at residues 135 to 155 (VVLVTLLVSLVLLTLNSLLIN). Topologically, residues 156 to 189 (LEINICINEYQRNITYSFNSYYHANCHRQMLSLH) are extracellular. N168 carries N-linked (GlcNAc...) asparagine glycosylation. The chain crosses the membrane as a helical span at residues 190-210 (IIFLSVPFVLSLSTFLLLIFS). Residues 211–238 (LGTHHKKMQQHVQGRRDASTMAHFKALQ) lie on the Cytoplasmic side of the membrane. Residues 239–259 (TVIAFLLLYSIFILSVLVQIW) traverse the membrane as a helical segment. Residues 260-268 (KYELLKKNL) lie on the Extracellular side of the membrane. Residues 269 to 289 (FILFCQVAYVAFPSFHSYILI) form a helical membrane-spanning segment. Topologically, residues 290 to 318 (LGDMKMRQACLSVLWWQKFRKNYVEPLDL) are cytoplasmic.

This sequence belongs to the G-protein coupled receptor T2R family.

The protein localises to the membrane. In terms of biological role, putative taste receptor which may play a role in the perception of bitterness. The protein is Taste receptor type 2 member 117 of Rattus norvegicus (Rat).